The primary structure comprises 514 residues: CENP-B homolog protein 1 (514 aa).

One can recognise an HTH CENPB-type domain in the interval D69–A144.

The protein localises to the nucleus. Its subcellular location is the chromosome. It localises to the centromere. In terms of biological role, binds to centromeric K-type repeat DNA and ARS3002 DNA. The CBH-binding consensus sequence is Py-Pu-A-T-A-T-Py-Pu-T-A. The sequence is that of CENP-B homolog protein 1 (cbh1) from Schizosaccharomyces pombe (strain 972 / ATCC 24843) (Fission yeast).